A 554-amino-acid chain; its full sequence is Calcium-dependent protein kinase 3 (554 aa).

The tract at residues 30-55 (KKKSSNKSIKSQHKFEGSKIANKNNE) is disordered. In terms of domain architecture, Protein kinase spans 110-365 (NLSEEPLGKG…ASEALKHPWF (256 aa)). ATP-binding positions include 116 to 124 (LGKGTYGCV) and lysine 139. The active-site Proton acceptor is the aspartate 230. The J domain autoinhibitory motif motif lies at 385 to 393 (NFKNYALLL). Residues 385-420 (NFKNYALLLKLQKLAMTIIAQQSNDYDLQQLKTVFL) form a j domain region. Residues 394-403 (KLQKLAMTII) carry the J domain EF-hand interaction motif motif. EF-hand domains are found at residues 410–445 (YDLQQLKTVFLYLDEDGKGNITKNQLKKGLENSGLK), 448–479 (QNFDVLLDQIDSDGSGRIDYTEFLAAALDRKH), 480–515 (LSKKLIYCAFRVFDVDNDGEITTAELAHILYNGNKK), and 521–554 (KDVNQVKKMIQEVDKNNDGKIDFYEFCEMMKLKY). The Ca(2+) site is built by aspartate 458, aspartate 460, serine 462, arginine 464, glutamate 469, aspartate 493, aspartate 495, aspartate 497, glutamate 499, glutamate 504, aspartate 534, asparagine 536, aspartate 538, lysine 540, and glutamate 545.

It belongs to the protein kinase superfamily. Ser/Thr protein kinase family. CDPK subfamily. It depends on Mg(2+) as a cofactor.

Its subcellular location is the cytoplasm. The catalysed reaction is L-seryl-[protein] + ATP = O-phospho-L-seryl-[protein] + ADP + H(+). It carries out the reaction L-threonyl-[protein] + ATP = O-phospho-L-threonyl-[protein] + ADP + H(+). Its activity is regulated as follows. Activated by calcium. Upon calcium binding to the EF-hand domain 2, the C-terminus of the junction domain (J domain) undergoes a conformational change which results in the dissociation of the pseudo-substrate inhibitory motif from the catalytic domain. This, in turn, may facilitate the autophosphorylation of the activation loop at Thr-271, which leads to the kinase activation. Calcium-dependent protein kinase which acts as a sensor and effector of intracellular Ca(2+) levels probably in part downstream of cGMP-activated PKG kinase. In the mosquito midgut, regulates the gliding motility of the ookinete which is essential for the ookinete to invade the midgut epithelium. However, another study showed that while required for ookinete invasion of the midgut epithelium, is not required for ookinete gliding motility. This Plasmodium berghei (strain Anka) protein is Calcium-dependent protein kinase 3.